Reading from the N-terminus, the 139-residue chain is MKITARRRARECAVQALYSWQLSNNNIADIEAQFLAEQDIKGIDVAYFRELYSGTAIAADMLDQLMVPYLSRPLDKLGHVERAVLRLALYELSKRQDIPYRVAINEAIELAKTFGAEDSYKFINGVLEKTASQIRPHRK.

It belongs to the NusB family.

In terms of biological role, involved in transcription antitermination. Required for transcription of ribosomal RNA (rRNA) genes. Binds specifically to the boxA antiterminator sequence of the ribosomal RNA (rrn) operons. The chain is Transcription antitermination protein NusB from Baumannia cicadellinicola subsp. Homalodisca coagulata.